Here is a 142-residue protein sequence, read N- to C-terminus: Small ribosomal subunit protein bS6 (142 aa).

Positions 113–136 are enriched in basic and acidic residues; it reads IKKEPREPREPRAPREPKAEKIEE. Residues 113–142 form a disordered region; that stretch reads IKKEPREPREPRAPREPKAEKIEEQTFSEE.

This sequence belongs to the bacterial ribosomal protein bS6 family.

Binds together with bS18 to 16S ribosomal RNA. The polypeptide is Small ribosomal subunit protein bS6 (Campylobacter curvus (strain 525.92)).